The sequence spans 362 residues: Probable dual-specificity RNA methyltransferase RlmN (362 aa).

Glutamate 105 functions as the Proton acceptor in the catalytic mechanism. Residues 111–344 enclose the Radical SAM core domain; sequence HEYGNSICVT…VTIRREQGHD (234 aa). Cysteine 118 and cysteine 349 are oxidised to a cystine. Positions 125, 129, and 132 each coordinate [4Fe-4S] cluster. Residues 175–176, serine 207, 230–232, and asparagine 306 each bind S-adenosyl-L-methionine; these read GE and SLH. The active-site S-methylcysteine intermediate is cysteine 349.

The protein belongs to the radical SAM superfamily. RlmN family. The cofactor is [4Fe-4S] cluster.

It localises to the cytoplasm. The enzyme catalyses adenosine(2503) in 23S rRNA + 2 reduced [2Fe-2S]-[ferredoxin] + 2 S-adenosyl-L-methionine = 2-methyladenosine(2503) in 23S rRNA + 5'-deoxyadenosine + L-methionine + 2 oxidized [2Fe-2S]-[ferredoxin] + S-adenosyl-L-homocysteine. It catalyses the reaction adenosine(37) in tRNA + 2 reduced [2Fe-2S]-[ferredoxin] + 2 S-adenosyl-L-methionine = 2-methyladenosine(37) in tRNA + 5'-deoxyadenosine + L-methionine + 2 oxidized [2Fe-2S]-[ferredoxin] + S-adenosyl-L-homocysteine. In terms of biological role, specifically methylates position 2 of adenine 2503 in 23S rRNA and position 2 of adenine 37 in tRNAs. In Bacillus cereus (strain ATCC 14579 / DSM 31 / CCUG 7414 / JCM 2152 / NBRC 15305 / NCIMB 9373 / NCTC 2599 / NRRL B-3711), this protein is Probable dual-specificity RNA methyltransferase RlmN.